A 1525-amino-acid polypeptide reads, in one-letter code: Receptor-type guanylate cyclase Gyc76C (1525 aa).

The signal sequence occupies residues 1–19; the sequence is MTRWPFNLLLLLSVAVRDC. At 20 to 493 the chain is on the extracellular side; sequence SNHRTVLTVG…KKDDTHYTST (474 aa). Residues Asn74, Asn184, Asn222, Asn338, Asn383, Asn394, Asn416, Asn428, and Asn458 are each glycosylated (N-linked (GlcNAc...) asparagine). Residues 494–514 form a helical membrane-spanning segment; the sequence is VAAVVLGVLLFCSGVITMSIY. The Cytoplasmic segment spans residues 515 to 1525; that stretch reads RKWKIELEIE…AAARDRESIV (1011 aa). Residues 547 to 824 form the Protein kinase domain; the sequence is PSKVSLMSAQ…SVIRNRLKKM (278 aa). ATP is bound by residues 553–561 and Lys581; that span reads MSAQSYGSR. In terms of domain architecture, Guanylate cyclase spans 896–1026; it reads TIYFSDIVGF…DTVNTASRME (131 aa). Residues Asp901, Ile902, and Asp945 each coordinate Mg(2+). Disordered regions lie at residues 1122–1168, 1192–1217, and 1256–1308; these read GSRR…NGLG, ETNE…LVRQ, and ESRS…VHSS. Residues 1147–1162 are compositionally biased toward basic and acidic residues; it reads ESPRMVSKRDRDRERP. Residues 1202 to 1212 are compositionally biased toward gly residues; it reads GGSGGVSGSGS. The span at 1282–1308 shows a compositional bias: polar residues; it reads LSKNNSRSLDTGVSLISGNPNGEVHSS.

It belongs to the adenylyl cyclase class-4/guanylyl cyclase family. As to quaternary structure, interacts with the semaphorin 1A receptor PlexA; PlexA enhances Gyc76C catalytic activity. Interacts with the PDZ domain-containing protein kermit; kermit increases cell surface expression of Gyc76C. As to expression, in the adult, widely distributed in the head and thorax with highest levels in the optic lobe and central brain and expression also detected in the retina. Expressed at similar levels in adult head and body. In females, highly expressed in oocytes with lower levels in the digestive tract. In mid-embryogenesis, enriched in the circular visceral mesoderm that overlies the migrating salivary gland and in the fat body that underlies the gland but at background levels in the gland itself. In late embryogenesis, detected in the mature salivary gland, in the somatic body wall muscles and the tendon cells to which the muscles attach, and in the constricting midgut. Also expressed in migrating tracheal cells at mid-embryogenesis and in the developed trachea at the end of embryogenesis with enrichment in the apical domains.

The protein localises to the cell membrane. It catalyses the reaction GTP = 3',5'-cyclic GMP + diphosphate. Functionally, guanylate cyclase involved in the production of the second messenger cGMP. Acts as a receptor for the NPLP1-4 peptide and modulates the innate immune IMD pathway in response to salt stress by inducing nuclear translocation of NF-kappa-B protein Rel which leads to increased expression of the antimicrobial peptide diptericin. Plays a role in Sema-1a-mediated axon repulsion which is required for the correct establishment of neuromuscular connectivity. Required in developing embryonic somatic muscle for correct patterning of ventral and lateral muscles and for localization of integrin beta-ps at developing dorsal muscle myotendinous junctions. Required for invagination, migration and lumen shape of the embryonic salivary gland by regulating the localization of the integrin-binding protein rhea/Talin to the visceral mesoderm surrounding the gland and maintaining the laminin matrix. Required in the developing wing to regulate extracellular matrix (ECM) organization by activating the cGMP-dependent protein kinase For which represses the activity of matrix metalloproteases such as Mmp2 and decreases ECM matrix reorganization. The protein is Receptor-type guanylate cyclase Gyc76C of Drosophila melanogaster (Fruit fly).